A 540-amino-acid polypeptide reads, in one-letter code: MDSRRSLLVLALLFISFLVYEQWQMDYNTPKPVATEQAQAVSSNAEMPASTSSTEGTVDNVAQGKIISIQNDVFTLKVDTLGGDVVESSLTNYAAELNSDARFILLQNKPNEVYVAQSGLIGKNGIDTKAGRAAYQVEAEQFTLADGQNELRVPLTLEKDGVIYRKVFVIKAGSYDIEVNYEIQNQTNEAIEVQPYGQLKHTLVQSSGSMAMPTYTGGAYSSADTNYKKYSFDEMKDKNLSIDTKAGWVAVLQHYFVSAWIPNQDADNQLYTSTANGLGFIGYRGPVVNVPAGGSETIKSALWTGPKLQNEMGAVANHLDLTVDYGWAWFIAKPLFWLLNVIQSIVSNWGLAIIGVTIVVKGILYPLTKAQYTSMAKMRMLQPKLQEMRERFGDDRQRMSQEMMKLYKEEKVNPLGGCLPLLIQMPIFIALYWTFMEAVELRHAPFFGWIQDLSAQDPYYILPILMGASMFLLQKMSPTPVADPMQQKIMNFMPLIFMVFFLWFPAGLVLYWLVSNIITIVQQQLIYRGLEKKGLHSRKK.

5 consecutive transmembrane segments (helical) span residues 7–27 (LLVLALLFISFLVYEQWQMDY), 345–365 (IVSNWGLAIIGVTIVVKGILY), 415–435 (LGGCLPLLIQMPIFIALYWTF), 453–473 (LSAQDPYYILPILMGASMFLL), and 494–514 (PLIFMVFFLWFPAGLVLYWLV).

The protein belongs to the OXA1/ALB3/YidC family. Type 1 subfamily. In terms of assembly, interacts with the Sec translocase complex via SecD. Specifically interacts with transmembrane segments of nascent integral membrane proteins during membrane integration.

The protein resides in the cell inner membrane. Required for the insertion and/or proper folding and/or complex formation of integral membrane proteins into the membrane. Involved in integration of membrane proteins that insert both dependently and independently of the Sec translocase complex, as well as at least some lipoproteins. Aids folding of multispanning membrane proteins. This chain is Membrane protein insertase YidC, found in Mannheimia succiniciproducens (strain KCTC 0769BP / MBEL55E).